Reading from the N-terminus, the 61-residue chain is Probable tautomerase SSP1389 (61 aa).

P2 serves as the catalytic Proton acceptor; via imino nitrogen.

This sequence belongs to the 4-oxalocrotonate tautomerase family.

This Staphylococcus saprophyticus subsp. saprophyticus (strain ATCC 15305 / DSM 20229 / NCIMB 8711 / NCTC 7292 / S-41) protein is Probable tautomerase SSP1389.